A 378-amino-acid chain; its full sequence is Ribosomal RNA large subunit methyltransferase G (378 aa).

Belongs to the methyltransferase superfamily. RlmG family.

It is found in the cytoplasm. The catalysed reaction is guanosine(1835) in 23S rRNA + S-adenosyl-L-methionine = N(2)-methylguanosine(1835) in 23S rRNA + S-adenosyl-L-homocysteine + H(+). Its function is as follows. Specifically methylates the guanine in position 1835 (m2G1835) of 23S rRNA. The polypeptide is Ribosomal RNA large subunit methyltransferase G (Shewanella baltica (strain OS155 / ATCC BAA-1091)).